The sequence spans 368 residues: Chorismate synthase (368 aa).

Residue Arg46 participates in NADP(+) binding. FMN-binding positions include 124–126 (RAS), Gly284, 299–303 (KPTPS), and Arg326.

Belongs to the chorismate synthase family. The cofactor is FMNH2.

The enzyme catalyses 5-O-(1-carboxyvinyl)-3-phosphoshikimate = chorismate + phosphate. The protein operates within metabolic intermediate biosynthesis; chorismate biosynthesis; chorismate from D-erythrose 4-phosphate and phosphoenolpyruvate: step 7/7. In terms of biological role, catalyzes the anti-1,4-elimination of the C-3 phosphate and the C-6 proR hydrogen from 5-enolpyruvylshikimate-3-phosphate (EPSP) to yield chorismate, which is the branch point compound that serves as the starting substrate for the three terminal pathways of aromatic amino acid biosynthesis. This reaction introduces a second double bond into the aromatic ring system. This is Chorismate synthase from Pyrobaculum aerophilum (strain ATCC 51768 / DSM 7523 / JCM 9630 / CIP 104966 / NBRC 100827 / IM2).